Consider the following 1401-residue polypeptide: DNA-directed RNA polymerase subunit beta' (1401 aa).

Residues Cys-71, Cys-73, Cys-86, and Cys-89 each coordinate Zn(2+). Asp-462, Asp-464, and Asp-466 together coordinate Mg(2+). 4 residues coordinate Zn(2+): Cys-810, Cys-884, Cys-891, and Cys-894. Residues 1378–1401 are disordered; that stretch reads EKQATIVPSAPEPEPLALPTPEQS.

This sequence belongs to the RNA polymerase beta' chain family. As to quaternary structure, the RNAP catalytic core consists of 2 alpha, 1 beta, 1 beta' and 1 omega subunit. When a sigma factor is associated with the core the holoenzyme is formed, which can initiate transcription. Mg(2+) is required as a cofactor. Zn(2+) serves as cofactor.

It carries out the reaction RNA(n) + a ribonucleoside 5'-triphosphate = RNA(n+1) + diphosphate. Its function is as follows. DNA-dependent RNA polymerase catalyzes the transcription of DNA into RNA using the four ribonucleoside triphosphates as substrates. This Rhodopseudomonas palustris (strain BisB18) protein is DNA-directed RNA polymerase subunit beta'.